The following is a 473-amino-acid chain: Photosystem II CP43 reaction center protein (473 aa).

A propeptide spanning residues 1–14 (MKTLYSLRRSYPVE) is cleaved from the precursor. An N-acetylthreonine modification is found at T15. T15 bears the Phosphothreonine mark. 5 helical membrane-spanning segments follow: residues 69-93 (LFEVAHFVPEKPMYEQGLILLPHLA), 134-155 (LIGPETLEESFPFFGYVWKDRN), 178-200 (KALYFGGVYDTWAPGGGDVRKIT), 255-275 (KPFAWARRAFVWSGEAYLSYS), and 291-312 (WFNNTAYPSEFYGPTGPEASQA). E367 is a binding site for [CaMn4O5] cluster. The chain crosses the membrane as a helical span at residues 447–471 (RARAAAAGFEKGIDRDFEPVLSMTP).

This sequence belongs to the PsbB/PsbC family. PsbC subfamily. As to quaternary structure, PSII is composed of 1 copy each of membrane proteins PsbA, PsbB, PsbC, PsbD, PsbE, PsbF, PsbH, PsbI, PsbJ, PsbK, PsbL, PsbM, PsbT, PsbX, PsbY, PsbZ, Psb30/Ycf12, at least 3 peripheral proteins of the oxygen-evolving complex and a large number of cofactors. It forms dimeric complexes. The cofactor is Binds multiple chlorophylls and provides some of the ligands for the Ca-4Mn-5O cluster of the oxygen-evolving complex. It may also provide a ligand for a Cl- that is required for oxygen evolution. PSII binds additional chlorophylls, carotenoids and specific lipids..

Its subcellular location is the plastid. It localises to the chloroplast thylakoid membrane. Functionally, one of the components of the core complex of photosystem II (PSII). It binds chlorophyll and helps catalyze the primary light-induced photochemical processes of PSII. PSII is a light-driven water:plastoquinone oxidoreductase, using light energy to abstract electrons from H(2)O, generating O(2) and a proton gradient subsequently used for ATP formation. This is Photosystem II CP43 reaction center protein from Abies alba (Edeltanne).